The sequence spans 372 residues: Queuine tRNA-ribosyltransferase (372 aa).

The active-site Proton acceptor is the aspartate 93. Substrate contacts are provided by residues 93–97, aspartate 147, glutamine 190, and glycine 217; that span reads DSGGF. The RNA binding stretch occupies residues 248-254; that stretch reads GVGSPDC. The active-site Nucleophile is aspartate 267. The RNA binding; important for wobble base 34 recognition stretch occupies residues 272–276; it reads TRMAR. Zn(2+) is bound by residues cysteine 305, cysteine 307, cysteine 310, and histidine 336.

The protein belongs to the queuine tRNA-ribosyltransferase family. In terms of assembly, homodimer. Within each dimer, one monomer is responsible for RNA recognition and catalysis, while the other monomer binds to the replacement base PreQ1. Requires Zn(2+) as cofactor.

It catalyses the reaction 7-aminomethyl-7-carbaguanine + guanosine(34) in tRNA = 7-aminomethyl-7-carbaguanosine(34) in tRNA + guanine. It functions in the pathway tRNA modification; tRNA-queuosine biosynthesis. In terms of biological role, catalyzes the base-exchange of a guanine (G) residue with the queuine precursor 7-aminomethyl-7-deazaguanine (PreQ1) at position 34 (anticodon wobble position) in tRNAs with GU(N) anticodons (tRNA-Asp, -Asn, -His and -Tyr). Catalysis occurs through a double-displacement mechanism. The nucleophile active site attacks the C1' of nucleotide 34 to detach the guanine base from the RNA, forming a covalent enzyme-RNA intermediate. The proton acceptor active site deprotonates the incoming PreQ1, allowing a nucleophilic attack on the C1' of the ribose to form the product. After dissociation, two additional enzymatic reactions on the tRNA convert PreQ1 to queuine (Q), resulting in the hypermodified nucleoside queuosine (7-(((4,5-cis-dihydroxy-2-cyclopenten-1-yl)amino)methyl)-7-deazaguanosine). This chain is Queuine tRNA-ribosyltransferase, found in Desulforudis audaxviator (strain MP104C).